The following is a 772-amino-acid chain: Phosphoribosylformylglycinamidine synthase subunit PurL (772 aa).

Residue His-62 is part of the active site. Positions 65 and 109 each coordinate ATP. Glu-111 lines the Mg(2+) pocket. Substrate-binding positions include 112 to 115 and Arg-134; that span reads SHNH. Catalysis depends on His-113, which acts as the Proton acceptor. Mg(2+) is bound at residue Asp-135. Gln-259 serves as a coordination point for substrate. A Mg(2+)-binding site is contributed by Asp-287. 331–333 provides a ligand contact to substrate; it reads ESQ. Asp-519 and Gly-556 together coordinate ATP. Asn-557 provides a ligand contact to Mg(2+). Ser-559 lines the substrate pocket.

It belongs to the FGAMS family. As to quaternary structure, monomer. Part of the FGAM synthase complex composed of 1 PurL, 1 PurQ and 2 PurS subunits.

It localises to the cytoplasm. It catalyses the reaction N(2)-formyl-N(1)-(5-phospho-beta-D-ribosyl)glycinamide + L-glutamine + ATP + H2O = 2-formamido-N(1)-(5-O-phospho-beta-D-ribosyl)acetamidine + L-glutamate + ADP + phosphate + H(+). It functions in the pathway purine metabolism; IMP biosynthesis via de novo pathway; 5-amino-1-(5-phospho-D-ribosyl)imidazole from N(2)-formyl-N(1)-(5-phospho-D-ribosyl)glycinamide: step 1/2. Its function is as follows. Part of the phosphoribosylformylglycinamidine synthase complex involved in the purines biosynthetic pathway. Catalyzes the ATP-dependent conversion of formylglycinamide ribonucleotide (FGAR) and glutamine to yield formylglycinamidine ribonucleotide (FGAM) and glutamate. The FGAM synthase complex is composed of three subunits. PurQ produces an ammonia molecule by converting glutamine to glutamate. PurL transfers the ammonia molecule to FGAR to form FGAM in an ATP-dependent manner. PurS interacts with PurQ and PurL and is thought to assist in the transfer of the ammonia molecule from PurQ to PurL. This Leifsonia xyli subsp. xyli (strain CTCB07) protein is Phosphoribosylformylglycinamidine synthase subunit PurL.